We begin with the raw amino-acid sequence, 216 residues long: MMVSLKSSLFFMLALLTVVHALNFDIPAKTNPEPFCLREYVGEKNLVIVNLKTTGNMGDGQTLSMMITDSSGNTHSSIQNVLGEKSVAFDVDASAMLDICFLNTLTPGAIESEHKKRSVKLEFTVGADADDYSSLQKANNLEPVEADIRRARDFIEEIKGKIYYLQAREARFRNTNESTNERVKNFAYLTFISLFVLVIWQILYLRSFFQRKHLIP.

The first 21 residues, 1–21 (MMVSLKSSLFFMLALLTVVHA), serve as a signal peptide directing secretion. Over 22–184 (LNFDIPAKTN…TNESTNERVK (163 aa)) the chain is Lumenal. Residues 34 to 150 (PFCLREYVGE…LEPVEADIRR (117 aa)) enclose the GOLD domain. The helical transmembrane segment at 185-205 (NFAYLTFISLFVLVIWQILYL) threads the bilayer. Topologically, residues 206–216 (RSFFQRKHLIP) are cytoplasmic.

Belongs to the EMP24/GP25L family.

It is found in the endoplasmic reticulum membrane. It localises to the golgi apparatus membrane. Constituent of COPII-coated endoplasmic reticulum-derived transport vesicles. Required for efficient transport of a subset of secretory proteins to the Golgi. Facilitates retrograde transport from the Golgi to the endoplasmic reticulum. This chain is Endoplasmic reticulum vesicle protein 25 (erv25), found in Schizosaccharomyces pombe (strain 972 / ATCC 24843) (Fission yeast).